A 144-amino-acid polypeptide reads, in one-letter code: 3-hydroxyacyl-[acyl-carrier-protein] dehydratase FabZ (144 aa).

Histidine 47 is an active-site residue.

It belongs to the thioester dehydratase family. FabZ subfamily.

The protein resides in the cytoplasm. It catalyses the reaction a (3R)-hydroxyacyl-[ACP] = a (2E)-enoyl-[ACP] + H2O. In terms of biological role, involved in unsaturated fatty acids biosynthesis. Catalyzes the dehydration of short chain beta-hydroxyacyl-ACPs and long chain saturated and unsaturated beta-hydroxyacyl-ACPs. In Nitrosomonas eutropha (strain DSM 101675 / C91 / Nm57), this protein is 3-hydroxyacyl-[acyl-carrier-protein] dehydratase FabZ.